The chain runs to 576 residues: F-actin capping regulator BSP1 (576 aa).

A disordered region spans residues arginine 24–arginine 50. Phosphoserine is present on residues serine 46, serine 79, and serine 88. 2 disordered regions span residues asparagine 132–lysine 160 and glycine 173–proline 316. Position 185 is a phosphoserine (serine 185). Residues threonine 191 to proline 206 are compositionally biased toward basic and acidic residues. Serine 220 is modified (phosphoserine). Composition is skewed to polar residues over residues serine 243–leucine 255 and lysine 264–serine 279. The span at lysine 304 to lysine 313 shows a compositional bias: pro residues. 2 positions are modified to phosphoserine: serine 309 and serine 320. The interval serine 408–arginine 470 is interaction with F-actin. The segment at aspartate 541–valine 576 is disordered. Residues threonine 544–proline 556 show a composition bias toward basic and acidic residues. An interaction with the F-actin capping complex region spans residues arginine 547 to valine 576. Over residues asparagine 561 to valine 576 the composition is skewed to basic residues.

Interacts (via C-terminus) with the CAP1-CAP2 F-actin capping protein complex. Interacts with INP52 (via SAC domain); the interaction is direct. Interacts with INP53 (via SAC domain); the interaction is direct. Interacts with RVS167. Interacts with SLA1. Phosphorylated by CDC28.

It is found in the cytoplasm. The protein localises to the cytoskeleton. The protein resides in the actin patch. It localises to the cell membrane. Recruits the capping protein complex to actin patches and the actomyosin contractile ring, and/or stabilizes their interaction. May serve as an adapter to link INP52 and INP53 to the cortical actin cytoskeleton. Binds F-actin. This Saccharomyces cerevisiae (strain ATCC 204508 / S288c) (Baker's yeast) protein is F-actin capping regulator BSP1 (BSP1).